The chain runs to 344 residues: Dihydroorotase (344 aa).

His14 and His16 together coordinate Zn(2+). Substrate is bound by residues 16–18 (HLR) and Asn42. Lys100, His137, and His175 together coordinate Zn(2+). The residue at position 100 (Lys100) is an N6-carboxylysine. A substrate-binding site is contributed by His137. Residue Leu220 coordinates substrate. Residue Asp248 coordinates Zn(2+). Asp248 is a catalytic residue. His252 and Ala264 together coordinate substrate.

This sequence belongs to the metallo-dependent hydrolases superfamily. DHOase family. Class II DHOase subfamily. Homodimer. It depends on Zn(2+) as a cofactor.

It catalyses the reaction (S)-dihydroorotate + H2O = N-carbamoyl-L-aspartate + H(+). It participates in pyrimidine metabolism; UMP biosynthesis via de novo pathway; (S)-dihydroorotate from bicarbonate: step 3/3. Functionally, catalyzes the reversible cyclization of carbamoyl aspartate to dihydroorotate. This chain is Dihydroorotase, found in Ralstonia pickettii (strain 12J).